We begin with the raw amino-acid sequence, 175 residues long: D-glycero-beta-D-manno-heptose-1,7-bisphosphate 7-phosphatase (175 aa).

Aspartate 7 acts as the Nucleophile in catalysis. Mg(2+) contacts are provided by aspartate 7 and aspartate 9. Substrate is bound by residues 7–9 (DRD), 15–19 (DSDAY), and 50–53 (TNQS). Aspartate 9 acts as the Proton donor in catalysis. Zn(2+)-binding residues include cysteine 89, histidine 91, cysteine 97, and cysteine 99. A substrate-binding site is contributed by 100–101 (RK). Residue aspartate 126 participates in Mg(2+) binding.

It belongs to the gmhB family. In terms of assembly, monomer. Mg(2+) serves as cofactor. The cofactor is Zn(2+).

The protein resides in the cytoplasm. It carries out the reaction D-glycero-beta-D-manno-heptose 1,7-bisphosphate + H2O = D-glycero-beta-D-manno-heptose 1-phosphate + phosphate. The protein operates within nucleotide-sugar biosynthesis; ADP-L-glycero-beta-D-manno-heptose biosynthesis; ADP-L-glycero-beta-D-manno-heptose from D-glycero-beta-D-manno-heptose 7-phosphate: step 2/4. It participates in bacterial outer membrane biogenesis; LPS core biosynthesis. Functionally, converts the D-glycero-beta-D-manno-heptose 1,7-bisphosphate (beta-HBP) intermediate into D-glycero-beta-D-manno-heptose 1-phosphate by removing the phosphate group at the C-7 position. This is D-glycero-beta-D-manno-heptose-1,7-bisphosphate 7-phosphatase from Pseudomonas putida (strain ATCC 47054 / DSM 6125 / CFBP 8728 / NCIMB 11950 / KT2440).